The sequence spans 133 residues: ATP synthase epsilon chain (133 aa).

The protein belongs to the ATPase epsilon chain family. F-type ATPases have 2 components, CF(1) - the catalytic core - and CF(0) - the membrane proton channel. CF(1) has five subunits: alpha(3), beta(3), gamma(1), delta(1), epsilon(1). CF(0) has three main subunits: a, b and c.

It localises to the cell membrane. Produces ATP from ADP in the presence of a proton gradient across the membrane. The protein is ATP synthase epsilon chain of Bacillus anthracis (strain A0248).